The chain runs to 396 residues: Elongation factor Tu (396 aa).

In terms of domain architecture, tr-type G spans 11–205 (KPHVNIGTIG…TVDEYIPTPE (195 aa)). Residues 20–27 (GHVDHGKT) form a G1 region. 20 to 27 (GHVDHGKT) contributes to the GTP binding site. Position 27 (Thr-27) interacts with Mg(2+). The segment at 61–65 (GITIN) is G2. Residues 82 to 85 (DAPG) form a G3 region. GTP-binding positions include 82–86 (DAPGH) and 137–140 (NKCD). The tract at residues 137–140 (NKCD) is G4. The G5 stretch occupies residues 175-177 (SAL).

The protein belongs to the TRAFAC class translation factor GTPase superfamily. Classic translation factor GTPase family. EF-Tu/EF-1A subfamily. As to quaternary structure, monomer.

It is found in the cytoplasm. It carries out the reaction GTP + H2O = GDP + phosphate + H(+). GTP hydrolase that promotes the GTP-dependent binding of aminoacyl-tRNA to the A-site of ribosomes during protein biosynthesis. The protein is Elongation factor Tu of Lactobacillus helveticus (strain DPC 4571).